The sequence spans 128 residues: Fluoride-specific ion channel FluC (128 aa).

Helical transmembrane passes span 7–29, 36–57, 65–94, and 98–126; these read LNFIAIGIGATLGAWLRWVLGLR, PWGTLTANLVGGYLIGVMVALI, AWIRLAAVTGFLGGLTTFSTFSAETVDMLE, and YATAAAYAGASLAGSLAMTGLGLATVRLL. Asn-43 is a fluoride binding site. Na(+) contacts are provided by Gly-77 and Thr-80. Tyr-104, Ser-108, and Ser-112 together coordinate fluoride.

The protein belongs to the fluoride channel Fluc/FEX (TC 1.A.43) family. Homodimer.

Its subcellular location is the cell inner membrane. It carries out the reaction fluoride(in) = fluoride(out). Its activity is regulated as follows. Na(+) is not transported, but it plays an essential structural role and its presence is essential for fluoride channel function. The Na(+)-binding site is specific for Na(+) over most other cations including K(+) and Mg(2+). Fluoride efflux is inhibited by Li(2+). In terms of biological role, fluoride-specific ion channel. Important for reducing fluoride concentration in the cell, thus reducing its toxicity. Is highly specific for fluoride ions and cannot transport chloride ions. The polypeptide is Fluoride-specific ion channel FluC (Bordetella pertussis (strain Tohama I / ATCC BAA-589 / NCTC 13251)).